Reading from the N-terminus, the 89-residue chain is MVRFNCFITEQDGQGDHVTQIKRFNINRFRFRRYFRVFNHRFNGFSRFRFCLGDFTLFLGNNRCWLVIGFSVCFDNRRRLNDYFRLNDN.

The protein is Putative protein p54 (54) of Acyrthosiphon pisum secondary endosymbiont phage 1 (Bacteriophage APSE-1).